We begin with the raw amino-acid sequence, 907 residues long: MDTSCVHMLLSLLALLQLVAAGSSPGPDAIPRGCPSHCHCELDGRMLLRVDCSDLGLSELPSNLSVFTSYLDLSMNNISQLPASLLHRLCFLEELRLAGNALTHIPKGAFTGLHSLKVLMLQNNQLRQVPEEALQNLRSLQSLRLDANHISYVPPSCFSGLHSLRHLWLDDNALTDVPVQAFRSLSALQAMTLALNKIHHIADYAFGNLSSLVVLHLHNNRIHSLGKKCFDGLHSLETLDLNYNNLDEFPTAIKTLSNLKELGFHSNNIRSIPERAFVGNPSLITIHFYDNPIQFVGVSAFQHLPELRTLTLNGASHITEFPHLTGTATLESLTLTGAKISSLPQAVCDQLPNLQVLDLSYNLLEDLPSLSGCQKLQKIDLRHNEIYEIKGSTFQQLFNLRSLNLAWNKIAIIHPNAFSTLPSLIKLDLSSNLLSSFPVTGLHGLTHLKLTGNRALQSLIPSANFPELKIIEMPSAYQCCAFGGCENVYKISNQWNKDDGNSVDDLHKKDAGLFQVQDERDLEDFLLDFEEDLKALHSVQCSPSPGPFKPCEHLFGSWLIRIGVWTTAVLALSCNALVALTVFRTPLYISSIKLLIGVIAVVDILMGVSSAVLAAVDAFTFGRFAQHGAWWEDGIGCQIVGFLSIFASESSIFLLTLAALERGFSVKCSSKFEVKAPLFSLRAIVLLCVLLALTIATIPLLGGSKYNASPLCLPLPFGEPSTTGYMVALVLLNSLCFLIMTIAYTKLYCSLEKGELENLWDCSMVKHIALLLFANCILYCPVAFLSFSSLLNLTFISPDVIKFILLVIVPLPSCLNPLLYIVFNPHFKEDMGSLGKHTRFWMRSKHASLLSINSDDVEKRSCESTQALVSFTHASIAYDLPSTSGASPAYPMTESCHLSSVAFVPCL.

The first 21 residues, 1–21 (MDTSCVHMLLSLLALLQLVAA), serve as a signal peptide directing secretion. At 22–561 (GSSPGPDAIP…EHLFGSWLIR (540 aa)) the chain is on the extracellular side. An LRRNT domain is found at 25-66 (PGPDAIPRGCPSHCHCELDGRMLLRVDCSDLGLSELPSNLSV). Cystine bridges form between C34/C40 and C38/C52. 2 N-linked (GlcNAc...) asparagine glycosylation sites follow: N63 and N77. LRR repeat units lie at residues 67-88 (FTSY…LLHR), 91-112 (FLEE…AFTG), 115-136 (SLKV…ALQN), 139-160 (SLQS…CFSG), 163-184 (SLRH…AFRS), 187-208 (ALQA…AFGN), 211-232 (SLVV…CFDG), 235-256 (SLET…IKTL), 258-279 (NLKE…AFVG), 282-303 (SLIT…AFQH), 306-325 (ELRT…PHLT), 329-350 (TLES…VCDQ), 353-374 (NLQV…SGCQ), 375-396 (KLQK…TFQQ), 399-420 (NLRS…AFST), and 423-446 (SLIK…HGLT). N208 carries an N-linked (GlcNAc...) asparagine glycan. Residues C348 and C373 are joined by a disulfide bond. C479 and C541 form a disulfide bridge. A helical membrane pass occupies residues 562-582 (IGVWTTAVLALSCNALVALTV). The Cytoplasmic segment spans residues 583-593 (FRTPLYISSIK). Residues 594–614 (LLIGVIAVVDILMGVSSAVLA) form a helical membrane-spanning segment. Topologically, residues 615–638 (AVDAFTFGRFAQHGAWWEDGIGCQ) are extracellular. An intrachain disulfide couples C637 to C712. Residues 639–659 (IVGFLSIFASESSIFLLTLAA) form a helical membrane-spanning segment. Over 660–682 (LERGFSVKCSSKFEVKAPLFSLR) the chain is Cytoplasmic. Residues 683-703 (AIVLLCVLLALTIATIPLLGG) traverse the membrane as a helical segment. The Extracellular portion of the chain corresponds to 704 to 723 (SKYNASPLCLPLPFGEPSTT). Residues 724–744 (GYMVALVLLNSLCFLIMTIAY) form a helical membrane-spanning segment. Topologically, residues 745 to 767 (TKLYCSLEKGELENLWDCSMVKH) are cytoplasmic. The chain crosses the membrane as a helical span at residues 768–788 (IALLLFANCILYCPVAFLSFS). Residues 789 to 802 (SLLNLTFISPDVIK) lie on the Extracellular side of the membrane. N792 is a glycosylation site (N-linked (GlcNAc...) asparagine). The helical transmembrane segment at 803–823 (FILLVIVPLPSCLNPLLYIVF) threads the bilayer. Topologically, residues 824–907 (NPHFKEDMGS…LSSVAFVPCL (84 aa)) are cytoplasmic.

It belongs to the G-protein coupled receptor 1 family. In terms of assembly, identified in a complex composed of RNF43, LGR5 and RSPO1. Also interacts with other R-spondin ligands, including RSPO2, RSPO3 and RSPO4. As to expression, expressed in the intestinal epithelium (at protein level). Expressed in the gonads, the adrenal gland, and in the brain. In the central nervous system expression is restricted to the olfactory bulb. In the adrenal gland detected only in the neural-crest derived chromaffin cells of the medulla, but not in the cells of the adrenal cortex. In the gonads, the expression is high in Graafian follicle, but absent from primary and secondary follicles. In the intestine, exclusively expressed in cycling crypt base columnar cells. Expressed in the lower bulge and secondary germ area of telogen hair follicles and in the lower outer root sheath of anagen hair follicle.

It is found in the cell membrane. The protein localises to the golgi apparatus. Its subcellular location is the trans-Golgi network membrane. In terms of biological role, receptor for R-spondins that potentiates the canonical Wnt signaling pathway and acts as a stem cell marker of the intestinal epithelium and the hair follicle. Upon binding to R-spondins (RSPO1, RSPO2, RSPO3 or RSPO4), associates with phosphorylated LRP6 and frizzled receptors that are activated by extracellular Wnt receptors, triggering the canonical Wnt signaling pathway to increase expression of target genes. In contrast to classical G-protein coupled receptors, does not activate heterotrimeric G-proteins to transduce the signal. Involved in the development and/or maintenance of the adult intestinal stem cells during postembryonic development. The sequence is that of Leucine-rich repeat-containing G-protein coupled receptor 5 (Lgr5) from Mus musculus (Mouse).